The primary structure comprises 347 residues: Phosphoribosylformylglycinamidine cyclo-ligase (347 aa).

The protein belongs to the AIR synthase family.

It is found in the cytoplasm. It carries out the reaction 2-formamido-N(1)-(5-O-phospho-beta-D-ribosyl)acetamidine + ATP = 5-amino-1-(5-phospho-beta-D-ribosyl)imidazole + ADP + phosphate + H(+). Its pathway is purine metabolism; IMP biosynthesis via de novo pathway; 5-amino-1-(5-phospho-D-ribosyl)imidazole from N(2)-formyl-N(1)-(5-phospho-D-ribosyl)glycinamide: step 2/2. This Prochlorococcus marinus (strain AS9601) protein is Phosphoribosylformylglycinamidine cyclo-ligase.